The chain runs to 1025 residues: Rho GTPase-activating protein Graf (1025 aa).

The PH domain occupies 271–388; that stretch reads IFTKRGYLFL…WISAMDGTEP (118 aa). In terms of domain architecture, Rho-GAP spans 402-589; that stretch reads YHLDEAGFMF…ILIDNYERIF (188 aa). The tract at residues 824-866 is disordered; sequence GSASGPQQHPPVQRGLHSYGQTKHYSPLMPTSTSSSNDSVCDS. The span at 854-866 shows a compositional bias: low complexity; it reads TSTSSSNDSVCDS. Residues 963–1023 form the SH3 domain; the sequence is TGTARVRTLY…PENYVEHLKP (61 aa).

As to quaternary structure, interacts with Egfr (when ubiquitinated). In terms of tissue distribution, in the adult brain, expressed in the antennal lobe, the subesophageal ganglion and the alpha/beta neurons of the mushroom body.

Its subcellular location is the cytoplasm. The protein localises to the cytosol. The protein resides in the cytoplasmic vesicle. In terms of biological role, GTPase-activating protein for Rho family proteins. Essential component of the CLIC (clathrin-independent carrier)/GEEC (GPI-anchored protein-enriched early endocytic compartment) endocytic pathway. During hematopoiesis, inhibits Egfr-ras-MAPK signaling by promoting Spi-induced Egfr internalization through CLIC/GEEC endocytosis, thereby preventing plasmatocyte overproliferation. Essential for normal mushroom body (MB) development and consequently the formation of olfactory long-term memories. During MD development, required to stop the MB beta-lobe from crossing the brain midline, possibly acting via its role in the CLIC/GEEC endocytic pathway to down-regulate the Egfr-ras-MAPK signaling at the tip of the beta-lobes. Required during embryo cellularization for maintaining and regulating the rate of actomyosin ring constriction. During cellularization, inhibits Rho-GTP levels at the furrow canal tip in a spatiotemporal manner, thus delaying the onset of actomyosin contraction and ensuring appropriate closure of the cells at the base of nuclei after membrane extension. The chain is Rho GTPase-activating protein Graf from Drosophila melanogaster (Fruit fly).